A 167-amino-acid chain; its full sequence is Translationally-controlled tumor protein homolog (167 aa).

The 167-residue stretch at 1-167 (MIIYKDIFSG…WKHGIDEEKI (167 aa)) folds into the TCTP domain.

The protein belongs to the TCTP family.

It is found in the cytoplasm. It localises to the cytoskeleton. In terms of biological role, involved in protein synthesis. Involved in microtubule stabilization. The polypeptide is Translationally-controlled tumor protein homolog (Candida glabrata (strain ATCC 2001 / BCRC 20586 / JCM 3761 / NBRC 0622 / NRRL Y-65 / CBS 138) (Yeast)).